The following is a 26-amino-acid chain: Phospholipase A2 homolog A1 (26 aa).

Post-translationally, contains 7 disulfide bonds. Expressed by the venom gland.

The protein resides in the secreted. The protein is Phospholipase A2 homolog A1 of Micrurus pyrrhocryptus (Coral snake).